An 853-amino-acid chain; its full sequence is DNA mismatch repair protein MutS (853 aa).

ATP is bound at residue 616-623; it reads GPNMGGKS.

Belongs to the DNA mismatch repair MutS family.

Functionally, this protein is involved in the repair of mismatches in DNA. It is possible that it carries out the mismatch recognition step. This protein has a weak ATPase activity. The sequence is that of DNA mismatch repair protein MutS from Erwinia tasmaniensis (strain DSM 17950 / CFBP 7177 / CIP 109463 / NCPPB 4357 / Et1/99).